Here is a 312-residue protein sequence, read N- to C-terminus: Olfactory receptor 1493 (312 aa).

At 1 to 23 the chain is on the extracellular side; the sequence is MNNKTVITHFLLLGLPIPPEHQQ. Asn3 is a glycosylation site (N-linked (GlcNAc...) asparagine). A helical membrane pass occupies residues 24–48; the sequence is LFFALFLIMYLTTFLGNLLIVVLVQ. Residues 49 to 55 are Cytoplasmic-facing; sequence LDSHLHT. The chain crosses the membrane as a helical span at residues 56–77; the sequence is PMYLFLSNLSFSDLCFSSVTML. Over 78-98 the chain is Extracellular; the sequence is KLLQNIQSQVPSISYAGCLTQ. Residues Cys95 and Cys187 are joined by a disulfide bond. The chain crosses the membrane as a helical span at residues 99–118; that stretch reads IFFFLLFGYLGNFLLVAMAY. Residues 119-137 are Cytoplasmic-facing; sequence DRYVAICFPLHYTNIMSHK. A helical transmembrane segment spans residues 138–156; that stretch reads LCTCLLLVFWIMTSSHAMM. Over 157-194 the chain is Extracellular; it reads HTLLAARLSFCENNVLLNFFCDLFVLLKLACSDTYVNE. The chain crosses the membrane as a helical span at residues 195–217; sequence LMIHIMGVIIIVIPFVLIVISYA. The Cytoplasmic portion of the chain corresponds to 218 to 234; that stretch reads KIISSILKVPSTQSIHK. Residues 235 to 258 form a helical membrane-spanning segment; sequence VFSTCGSHLSVVSLFYGTIIGLYL. Topologically, residues 259 to 270 are extracellular; sequence CPSGDNFSLKGS. Residues 271–290 form a helical membrane-spanning segment; sequence AMAMMYTVVTPMLNPFIYSL. Residues 291–312 are Cytoplasmic-facing; sequence RNRDMKQALIRVTCSKKISLPW.

It belongs to the G-protein coupled receptor 1 family. In terms of tissue distribution, olfactory epithelium.

The protein localises to the cell membrane. Functionally, odorant receptor. This Rattus norvegicus (Rat) protein is Olfactory receptor 1493 (Olr1493).